The following is a 411-amino-acid chain: Lysosome-associated membrane glycoprotein 3 (411 aa).

Positions 1–21 (MPGQISAVAVLFLSLTVILHG) are cleaved as a signal peptide. Residues 22 to 376 (YQIREKEFPK…NVNECLSDYT (355 aa)) lie on the Lumenal side of the membrane. Polar residues predominate over residues 172–192 (HKSTTNQRPTLSTNVLGTSTP). The tract at residues 172 to 204 (HKSTTNQRPTLSTNVLGTSTPTHKDRSTTSPVP) is disordered. Residue N227 is glycosylated (N-linked (GlcNAc...) asparagine). Cystine bridges form between C232–C269 and C334–C371. The helical transmembrane segment at 377–397 (VVLPMVAIIVVVICVVGLSVY) threads the bilayer. Residues 398–411 (KIRQRHQSSAYQRI) are Cytoplasmic-facing.

Belongs to the LAMP family. In terms of assembly, monomer. Interacts with FURIN.

It is found in the cell surface. The protein localises to the lysosome membrane. The protein resides in the cytoplasmic vesicle membrane. It localises to the early endosome membrane. Its function is as follows. Lysosomal membrane glycoprotein which plays a role in the unfolded protein response (UPR) that contributes to protein degradation and cell survival during proteasomal dysfunction. Plays a role in the process of fusion of the lysosome with the autophagosome, thereby modulating the autophagic process. Promotes hepatocellular lipogenesis through activation of the PI3K/Akt pathway. May also play a role in dendritic cell function and in adaptive immunity. The sequence is that of Lysosome-associated membrane glycoprotein 3 (Lamp3) from Mus musculus (Mouse).